Here is a 326-residue protein sequence, read N- to C-terminus: Protein TMED8 (326 aa).

The disordered stretch occupies residues Met1–Glu80. The 165-residue stretch at Pro160–Tyr324 folds into the GOLD domain. Position 170 is an N6-acetyllysine (Lys170). The tract at residues Asp238–Ser268 is disordered. The span at Ser239–Glu255 shows a compositional bias: acidic residues.

The chain is Protein TMED8 (TMED8) from Pongo abelii (Sumatran orangutan).